A 239-amino-acid polypeptide reads, in one-letter code: LexA repressor (239 aa).

The H-T-H motif DNA-binding region spans 26-46 (FDEMKEALDLASKSGIHRLIT). A disordered region spans residues 90 to 110 (GSLGKTPPPPARPAPVATNDD). Residues Ser-160 and Lys-198 each act as for autocatalytic cleavage activity in the active site.

The protein belongs to the peptidase S24 family. In terms of assembly, homodimer.

The catalysed reaction is Hydrolysis of Ala-|-Gly bond in repressor LexA.. Functionally, represses a number of genes involved in the response to DNA damage (SOS response), including recA and lexA. In the presence of single-stranded DNA, RecA interacts with LexA causing an autocatalytic cleavage which disrupts the DNA-binding part of LexA, leading to derepression of the SOS regulon and eventually DNA repair. This Brucella anthropi (strain ATCC 49188 / DSM 6882 / CCUG 24695 / JCM 21032 / LMG 3331 / NBRC 15819 / NCTC 12168 / Alc 37) (Ochrobactrum anthropi) protein is LexA repressor.